We begin with the raw amino-acid sequence, 604 residues long: Threonine--tRNA ligase (604 aa).

The catalytic stretch occupies residues 197-499 (DHRKLGRELG…LIEEYAGDFP (303 aa)). Zn(2+) contacts are provided by Cys-296, His-347, and His-476.

This sequence belongs to the class-II aminoacyl-tRNA synthetase family. Homodimer. It depends on Zn(2+) as a cofactor.

Its subcellular location is the cytoplasm. It catalyses the reaction tRNA(Thr) + L-threonine + ATP = L-threonyl-tRNA(Thr) + AMP + diphosphate + H(+). Functionally, catalyzes the attachment of threonine to tRNA(Thr) in a two-step reaction: L-threonine is first activated by ATP to form Thr-AMP and then transferred to the acceptor end of tRNA(Thr). Also edits incorrectly charged L-seryl-tRNA(Thr). This is Threonine--tRNA ligase from Synechococcus elongatus (strain ATCC 33912 / PCC 7942 / FACHB-805) (Anacystis nidulans R2).